The sequence spans 201 residues: Extracellular superoxide dismutase [Cu-Zn] (201 aa).

Positions 1–42 (MINSFIVIFLSFLIFINYANLVCVEATHVYGRRSHSNGMHGN) are cleaved as a signal peptide. The Cu cation site is built by His89, His91, and His106. Cys100 and Cys192 are disulfide-bonded. 4 residues coordinate Zn(2+): His106, His114, His123, and Asp126. Residue His163 participates in Cu cation binding.

Belongs to the Cu-Zn superoxide dismutase family. In terms of assembly, homodimer. Requires Cu cation as cofactor. It depends on Zn(2+) as a cofactor.

The protein localises to the secreted. The protein resides in the extracellular space. The catalysed reaction is 2 superoxide + 2 H(+) = H2O2 + O2. Its function is as follows. Destroys radicals which are normally produced within the cells and which are toxic to biological systems. May act in the parasite defense against phagocyte-generated reactive oxygen species. The sequence is that of Extracellular superoxide dismutase [Cu-Zn] (sod-4) from Onchocerca volvulus.